Reading from the N-terminus, the 130-residue chain is Zinc finger A20 and AN1 domain-containing stress-associated protein 10 (130 aa).

The A20-type zinc-finger motif lies at 4–38 (ETEALPCEGGCGLYGTRVNNNLCSLCYKKSVLQHS). Cysteine 10, cysteine 14, cysteine 26, cysteine 29, cysteine 71, cysteine 74, cysteine 85, cysteine 87, cysteine 92, histidine 95, histidine 101, and cysteine 103 together coordinate Zn(2+). The segment at 65 to 111 (PVKKRRCGICKRKVGMLGFKCRCGHMFCGSHRYPEEHSCPFDYKQSG) adopts an AN1-type zinc-finger fold.

Its function is as follows. May be involved in environmental stress response. The sequence is that of Zinc finger A20 and AN1 domain-containing stress-associated protein 10 (SAP10) from Arabidopsis thaliana (Mouse-ear cress).